Reading from the N-terminus, the 422-residue chain is Serine--tRNA ligase (422 aa).

226-228 provides a ligand contact to L-serine; the sequence is TSE. ATP is bound by residues 257-259 and valine 273; that span reads RRE. Residue glutamate 280 participates in L-serine binding. Residue 344–347 coordinates ATP; the sequence is ELTS. Residue threonine 379 participates in L-serine binding.

Belongs to the class-II aminoacyl-tRNA synthetase family. Type-1 seryl-tRNA synthetase subfamily. As to quaternary structure, homodimer. The tRNA molecule binds across the dimer.

Its subcellular location is the cytoplasm. It carries out the reaction tRNA(Ser) + L-serine + ATP = L-seryl-tRNA(Ser) + AMP + diphosphate + H(+). It catalyses the reaction tRNA(Sec) + L-serine + ATP = L-seryl-tRNA(Sec) + AMP + diphosphate + H(+). It participates in aminoacyl-tRNA biosynthesis; selenocysteinyl-tRNA(Sec) biosynthesis; L-seryl-tRNA(Sec) from L-serine and tRNA(Sec): step 1/1. Its function is as follows. Catalyzes the attachment of serine to tRNA(Ser). Is also able to aminoacylate tRNA(Sec) with serine, to form the misacylated tRNA L-seryl-tRNA(Sec), which will be further converted into selenocysteinyl-tRNA(Sec). The polypeptide is Serine--tRNA ligase (Corynebacterium glutamicum (strain ATCC 13032 / DSM 20300 / JCM 1318 / BCRC 11384 / CCUG 27702 / LMG 3730 / NBRC 12168 / NCIMB 10025 / NRRL B-2784 / 534)).